Reading from the N-terminus, the 547-residue chain is CTP synthase (547 aa).

The tract at residues 1 to 265 (MARYVFITGG…DQAVLDAFGI (265 aa)) is amidoligase domain. Residue serine 13 participates in CTP binding. Position 13 (serine 13) interacts with UTP. Residues 14 to 19 (SLGKGL) and aspartate 71 contribute to the ATP site. Aspartate 71 and glutamate 139 together coordinate Mg(2+). CTP is bound by residues 146-148 (DIE), 186-191 (KTKPTQ), and lysine 222. Residues 186–191 (KTKPTQ) and lysine 222 contribute to the UTP site. In terms of domain architecture, Glutamine amidotransferase type-1 spans 291–546 (RVAIVGKYTQ…VRAAVEVSRL (256 aa)). L-glutamine is bound at residue glycine 353. Cysteine 380 (nucleophile; for glutamine hydrolysis) is an active-site residue. Residues 381–384 (LGMQ), glutamate 404, and arginine 474 each bind L-glutamine. Catalysis depends on residues histidine 519 and glutamate 521.

This sequence belongs to the CTP synthase family. As to quaternary structure, homotetramer.

The catalysed reaction is UTP + L-glutamine + ATP + H2O = CTP + L-glutamate + ADP + phosphate + 2 H(+). It carries out the reaction L-glutamine + H2O = L-glutamate + NH4(+). It catalyses the reaction UTP + NH4(+) + ATP = CTP + ADP + phosphate + 2 H(+). The protein operates within pyrimidine metabolism; CTP biosynthesis via de novo pathway; CTP from UDP: step 2/2. Allosterically activated by GTP, when glutamine is the substrate; GTP has no effect on the reaction when ammonia is the substrate. The allosteric effector GTP functions by stabilizing the protein conformation that binds the tetrahedral intermediate(s) formed during glutamine hydrolysis. Inhibited by the product CTP, via allosteric rather than competitive inhibition. Functionally, catalyzes the ATP-dependent amination of UTP to CTP with either L-glutamine or ammonia as the source of nitrogen. Regulates intracellular CTP levels through interactions with the four ribonucleotide triphosphates. The chain is CTP synthase from Cereibacter sphaeroides (strain ATCC 17023 / DSM 158 / JCM 6121 / CCUG 31486 / LMG 2827 / NBRC 12203 / NCIMB 8253 / ATH 2.4.1.) (Rhodobacter sphaeroides).